The following is a 330-amino-acid chain: Polyprenal reductase (330 aa).

At 1–16 (MAGWAGAELSVLNPLR) the chain is on the cytoplasmic side. A helical transmembrane segment spans residues 17–37 (ALWLLLAAAFLLALLLQLAPA). The Lumenal segment spans residues 38–89 (RLLPSCALFQDLIRYGKTKQSGSRRPAVCRAFDVPKRYFSHFYVVSVLWNGS). Residues 90–110 (LLWFLSQSLFLGAPFPSWLWA) traverse the membrane as a helical segment. The Cytoplasmic portion of the chain corresponds to 111–136 (LLRTLGVTQFQALGMESKASRIQGKK). A helical transmembrane segment spans residues 137–157 (LALSTFLVLVFLWVHSLRRLF). Residues 158–169 (ECFYVSVFSNTA) lie on the Lumenal side of the membrane. Residues 170–190 (IHVVQYCFGLVYYVLVGLTVL) traverse the membrane as a helical segment. Topologically, residues 191-206 (SQVPMNDKNVYALGKN) are cytoplasmic. A helical transmembrane segment spans residues 207 to 227 (LLLQARWFHILGMMMFFWSSA). Residues 228–277 (HQYKCHVILSNLRRNKKGVVIHCQHRIPFGDWFEYVSSANYLAELMIYIS) are Lumenal-facing. Residues 278-298 (MAVTFGLHNVTWWLVVTYVFF) traverse the membrane as a helical segment. Over 299–330 (SQALSAFFNHRFYKSTFVSYPKHRKAFLPFLF) the chain is Cytoplasmic.

It belongs to the steroid 5-alpha reductase family. Polyprenal reductase subfamily. As to expression, expressed in the 2 tissues tested i.e. testis and liver.

It localises to the endoplasmic reticulum membrane. The enzyme catalyses a di-trans,poly-cis-dolichal + NADP(+) = a di-trans,poly-cis-polyprenal + NADPH + H(+). It carries out the reaction a 3-oxo-5alpha-steroid + NADP(+) = a 3-oxo-Delta(4)-steroid + NADPH + H(+). The catalysed reaction is androst-4-ene-3,17-dione + NADPH + H(+) = 5alpha-androstan-3,17-dione + NADP(+). It catalyses the reaction 17beta-hydroxy-5alpha-androstan-3-one + NADP(+) = testosterone + NADPH + H(+). It functions in the pathway protein modification; protein glycosylation. Functionally, plays a key role in early steps of protein N-linked glycosylation by being involved in the conversion of polyprenol into dolichol. Acts as a polyprenal reductase that mediates the reduction of polyprenal into dolichal in a NADP-dependent mechanism. Dolichols are required for the synthesis of dolichol-linked monosaccharides and the oligosaccharide precursor used for N-glycosylation. Also able to convert testosterone (T) into 5-alpha-dihydrotestosterone (DHT). This Rattus norvegicus (Rat) protein is Polyprenal reductase.